The primary structure comprises 176 residues: ATP-dependent protease subunit HslV (176 aa).

Thr-2 is a catalytic residue. 3 residues coordinate Na(+): Gly-157, Cys-160, and Thr-163.

Belongs to the peptidase T1B family. HslV subfamily. A double ring-shaped homohexamer of HslV is capped on each side by a ring-shaped HslU homohexamer. The assembly of the HslU/HslV complex is dependent on binding of ATP.

The protein localises to the cytoplasm. The catalysed reaction is ATP-dependent cleavage of peptide bonds with broad specificity.. With respect to regulation, allosterically activated by HslU binding. In terms of biological role, protease subunit of a proteasome-like degradation complex believed to be a general protein degrading machinery. In Escherichia coli O45:K1 (strain S88 / ExPEC), this protein is ATP-dependent protease subunit HslV.